A 402-amino-acid polypeptide reads, in one-letter code: Protein rds1 (402 aa).

Functionally, may have a function in stress-related responses of the cell. The polypeptide is Protein rds1 (rds1) (Schizosaccharomyces pombe (strain 972 / ATCC 24843) (Fission yeast)).